The primary structure comprises 1230 residues: Cullin-associated NEDD8-dissociated protein 1 (1230 aa).

A2 carries the N-acetylalanine modification. 12 HEAT repeats span residues 2-39, 44-81, 83-119, 131-165, 171-208, 210-247, 248-282, 289-366, 370-407, 424-467, 471-510, and 515-552; these read ASASYHISNLLEKMTSSDKDFRFMATNDLMTELQKDSI, DSERKVVKMILKLLEDKNGEVQNLAVKCLGPLVSKVKE, QVETIVDTLCTNMLSDKEQLRDISSIGLKTVIGELPP, CKKITGRLTSAIAKQEDVSVQLEALDIMADMLSRQ, NFHPSILTCLLPQLTSPRLAVRKRTIIALGHLVMSCGN, VFVDLIEHLLSELSKNDSMSTTRTYIQCIAAISRQAGH, RIGEYLEKIIPLVVKFCNVDDDELREYCIQAFESF, EVYP…TRHE, EFYKTVSPALISRFKEREENVKADVFHAYLSLLKQTRP, PLTM…VLPG, QHIPVLVPGIIFSLNDKSSSSNLKIDALSCLYVILCNHSP, and PHVQALVPPVVACVGDPFYKITSEALLVTQQLVKVIRP. Position 55 is an N6-acetyllysine (K55). A disordered region spans residues 315–344; sequence DEDEDENAMDADGGDDDDQGSDDEYSDDDD. S335 bears the Phosphoserine mark. A Phosphoserine modification is found at S558. HEAT repeat units follow at residues 563 to 602, 606 to 643, 646 to 683, 688 to 725, 729 to 768, 770 to 808, 809 to 845, 852 to 889, 890 to 927, 928 to 960, 961 to 998, 1002 to 1039, 1043 to 1097, 1099 to 1133, and 1140 to 1189; these read PYIKDLFTCTIKRLKAADIDQEVKERAISCMGQIICNLGD, SDLPNTLQIFLERLKNEITRLTTVKALTLIAGSPLKID, PVLGEGVPILASFLRKNQRALKLGTLSALDILIKNYSD, AMIDAVLDELPPLISESDMHVSQMAISFLTTLAKVYPS, KISGSILNELIGLVRSPLLQGGALSAMLDFFQALVVTGTN, LGYMDLLRMLTGPVYSQSTALTHKQSYYSIAKCVAALTR, ACPKEGPAVVGQFIQDVKNSRSTDSIRLLALLSLGEV, SGQLELKSVILEAFSSPSEEVKSAASYALGSISVGNLP, EYLPFVLQEITSQPKRQYLLLHSLKEIISSASVVGLKP, YVENIWALLLKHCECAEEGTRNVVAECLGKLTL, IDPETLLPRLKGYLISGSSYARSSVVTAVKFTISDHPQ, PLLKNCIGDFLKTLEDPDLNVRRVALVTFNSAAHNKPS, DLLD…DSCL, RLDIFEFLNHVEDGLKDHYDIKMLTFLMLVRLSTL, and QRLD…IPEA. Position 971 is an N6-acetyllysine (K971).

It belongs to the CAND family. In terms of assembly, interacts with TBP. Part of a complex that contains CUL1 and RBX1. Interacts with unneddylated cullins: interacts with CUL1, CUL2, CUL3, CUL4A, CUL4B and CUL5. Does not bind neddylated CUL1. Interaction with cullins is abolished in presence of COMMD1, which antagonizes with CAND1 for interacting with cullins. Interacts with ERCC6. Interacts with DCUN1D1, DCUN1D2, DCUN1D3, DCUN1D4 and DCUN1D5; these interactions are bridged by cullins and strongly inhibits the neddylation of cullins.

The protein localises to the cytoplasm. The protein resides in the nucleus. In terms of biological role, key assembly factor of SCF (SKP1-CUL1-F-box protein) E3 ubiquitin ligase complexes that promotes the exchange of the substrate-recognition F-box subunit in SCF complexes, thereby playing a key role in the cellular repertoire of SCF complexes. Acts as a F-box protein exchange factor. The exchange activity of CAND1 is coupled with cycles of neddylation conjugation: in the deneddylated state, cullin-binding CAND1 binds CUL1-RBX1, increasing dissociation of the SCF complex and promoting exchange of the F-box protein. Probably plays a similar role in other cullin-RING E3 ubiquitin ligase complexes. The protein is Cullin-associated NEDD8-dissociated protein 1 (CAND1) of Bos taurus (Bovine).